Consider the following 188-residue polypeptide: Xanthine phosphoribosyltransferase (188 aa).

Xanthine contacts are provided by L20 and N27. A 5-phospho-alpha-D-ribose 1-diphosphate-binding site is contributed by 127-131 (AYGNA). Residue K155 participates in xanthine binding.

The protein belongs to the purine/pyrimidine phosphoribosyltransferase family. Xpt subfamily. Homodimer.

Its subcellular location is the cytoplasm. The catalysed reaction is XMP + diphosphate = xanthine + 5-phospho-alpha-D-ribose 1-diphosphate. The protein operates within purine metabolism; XMP biosynthesis via salvage pathway; XMP from xanthine: step 1/1. Converts the preformed base xanthine, a product of nucleic acid breakdown, to xanthosine 5'-monophosphate (XMP), so it can be reused for RNA or DNA synthesis. This Parabacteroides distasonis (strain ATCC 8503 / DSM 20701 / CIP 104284 / JCM 5825 / NCTC 11152) protein is Xanthine phosphoribosyltransferase.